The primary structure comprises 116 residues: Putative pterin-4-alpha-carbinolamine dehydratase (116 aa).

This sequence belongs to the pterin-4-alpha-carbinolamine dehydratase family.

The enzyme catalyses (4aS,6R)-4a-hydroxy-L-erythro-5,6,7,8-tetrahydrobiopterin = (6R)-L-erythro-6,7-dihydrobiopterin + H2O. The protein is Putative pterin-4-alpha-carbinolamine dehydratase of Xylella fastidiosa (strain M12).